The following is a 278-amino-acid chain: 4-deoxy-L-threo-5-hexosulose-uronate ketol-isomerase (278 aa).

Residues histidine 196, histidine 198, glutamate 203, and histidine 245 each coordinate Zn(2+).

This sequence belongs to the KduI family. It depends on Zn(2+) as a cofactor.

It catalyses the reaction 5-dehydro-4-deoxy-D-glucuronate = 3-deoxy-D-glycero-2,5-hexodiulosonate. It functions in the pathway glycan metabolism; pectin degradation; 2-dehydro-3-deoxy-D-gluconate from pectin: step 4/5. Catalyzes the isomerization of 5-dehydro-4-deoxy-D-glucuronate to 3-deoxy-D-glycero-2,5-hexodiulosonate. This chain is 4-deoxy-L-threo-5-hexosulose-uronate ketol-isomerase, found in Shigella boydii serotype 4 (strain Sb227).